Consider the following 183-residue polypeptide: NRR repressor homolog 1 (183 aa).

Disordered regions lie at residues 1–40 (MEGV…VVGG) and 66–183 (NGEE…PTDQ). Over residues 31–40 (EEEEGAVVGG) the composition is skewed to acidic residues. Gly residues predominate over residues 70–79 (GAAGGDGDGA). A compositionally biased stretch (acidic residues) spans 101–115 (FEFEEAAAGAGDDDA). The span at 135 to 145 (AVEKRRTEKEA) shows a compositional bias: basic and acidic residues. The span at 150–161 (AEDDDDEQEGGE) shows a compositional bias: acidic residues. Positions 163–183 (VEGKEEHRPGRRVEAHGPTDQ) are enriched in basic and acidic residues.

It belongs to the NPR1-interactor family. In terms of assembly, interacts with NPR1/NH1. Interacts with NPR3/NH3.

The protein localises to the nucleus. Its function is as follows. Binds to and represses NPR1/NH1-mediated transcriptional activation of LG2 in vitro. The sequence is that of NRR repressor homolog 1 from Oryza sativa subsp. japonica (Rice).